The chain runs to 309 residues: Non-homologous end-joining factor 1 (309 aa).

A globular head region spans residues 1 to 134 (MEAVLSALPW…TPVAVVCRQL (134 aa)). Positions 223–298 (GKTGRKRKHS…AGSEDRSTSR (76 aa)) are C-terminal tail. The disordered stretch occupies residues 223–309 (GKTGRKRKHS…KKKKAVGLFR (87 aa)). Basic and acidic residues predominate over residues 243 to 252 (HITDHQHISE). Composition is skewed to polar residues over residues 253–265 (STDV…SQEH) and 273–290 (RSQV…STAG). Basic residues predominate over residues 297-309 (SRAKKKKAVGLFR). The XLM motif lies at 299-309 (AKKKKAVGLFR).

This sequence belongs to the XRCC4-XLF family. XLF subfamily. As to quaternary structure, homodimer. Interacts with xrcc4; the interaction is direct and is mediated via a head-to-head interaction between N-terminal head regions. Component of the core long-range non-homologous end joining (NHEJ) complex (also named DNA-PK complex) composed of prkdc/DNA-PKcs, lig4, xrcc4, xrcc6/Ku70, xrcc5/Ku80 and nhej1/xlf.

Its subcellular location is the nucleus. It localises to the chromosome. DNA repair protein involved in DNA non-homologous end joining (NHEJ); it is required for double-strand break (DSB) repair and V(D)J recombination and is also involved in telomere maintenance. Plays a key role in NHEJ by promoting the ligation of various mismatched and non-cohesive ends. In some studies, has been shown to associate with xrcc4 to form alternating helical filaments that bridge DNA and act like a bandage, holding together the broken DNA until it is repaired. Alternatively, it has also been shown that rather than forming filaments, a single nhej1 dimer interacts through both head domains with xrcc4 to promote the close alignment of DNA ends. The xrcc4-nhej1/xlf subcomplex binds to the DNA fragments of a DSB in a highly diffusive manner and robustly bridges two independent DNA molecules, holding the broken DNA fragments in close proximity to one other. The mobility of the bridges ensures that the ends remain accessible for further processing by other repair factors. In Danio rerio (Zebrafish), this protein is Non-homologous end-joining factor 1 (nhej1).